Consider the following 85-residue polypeptide: Makatoxin-2 (85 aa).

Positions 1–19 (MNYLIVISFALLLMTSVES) are cleaved as a signal peptide. The region spanning 21–83 (RDAYIADSEN…VPIRIPGPCR (63 aa)) is the LCN-type CS-alpha/beta domain. 4 disulfide bridges follow: C31-C82, C35-C55, C41-C65, and C45-C67.

Belongs to the long (4 C-C) scorpion toxin superfamily. Sodium channel inhibitor family. Alpha subfamily. In terms of tissue distribution, expressed by the venom gland.

Its subcellular location is the secreted. In terms of biological role, this protein markedly relaxes the rat carbachol-precontracted anococcygeus muscle. This relaxation is inhibited by the inhibitor of nitric oxide (NO) synthase, N-nitro-L-arginine methyl ester (L-NAME), suggesting that the response induced by this protein is NO-mediated. This chain is Makatoxin-2, found in Olivierus martensii (Manchurian scorpion).